The chain runs to 239 residues: Endonuclease V (239 aa).

Mg(2+) is bound by residues Asp50 and Asp118.

This sequence belongs to the endonuclease V family. It depends on Mg(2+) as a cofactor.

It is found in the cytoplasm. The catalysed reaction is Endonucleolytic cleavage at apurinic or apyrimidinic sites to products with a 5'-phosphate.. Its function is as follows. DNA repair enzyme involved in the repair of deaminated bases. Selectively cleaves double-stranded DNA at the second phosphodiester bond 3' to a deoxyinosine leaving behind the intact lesion on the nicked DNA. In Xylella fastidiosa (strain 9a5c), this protein is Endonuclease V.